We begin with the raw amino-acid sequence, 450 residues long: UDP-N-acetylmuramoylalanine--D-glutamate ligase (450 aa).

111–117 (GTNGKST) lines the ATP pocket.

This sequence belongs to the MurCDEF family.

It is found in the cytoplasm. The enzyme catalyses UDP-N-acetyl-alpha-D-muramoyl-L-alanine + D-glutamate + ATP = UDP-N-acetyl-alpha-D-muramoyl-L-alanyl-D-glutamate + ADP + phosphate + H(+). It functions in the pathway cell wall biogenesis; peptidoglycan biosynthesis. Functionally, cell wall formation. Catalyzes the addition of glutamate to the nucleotide precursor UDP-N-acetylmuramoyl-L-alanine (UMA). The sequence is that of UDP-N-acetylmuramoylalanine--D-glutamate ligase from Rickettsia bellii (strain RML369-C).